The chain runs to 156 residues: MGKEIEKKFIVSGDAYKSLAKGVLYRQGYIFFDKDKSVRVRVFNDKGYLTVKGTSTGISRLEYEYEIPVGEANEILEYLCEKPVIEKLRYKFQFEGFTWEVDEFLGENEGLVIAEIELPDENAVFKKPDWIGREVTGDPRYLNSNLVKNPYKNFKE.

Positions 2 to 148 (GKEIEKKFIV…PRYLNSNLVK (147 aa)) constitute a CYTH domain. Residue Y29 is the Proton acceptor of the active site.

In terms of assembly, homodimer.

It catalyses the reaction triphosphate + H2O = phosphate + diphosphate. It carries out the reaction ATP + H2O = ADP + phosphate + H(+). In terms of biological role, involved in the hydrolysis of the beta-gamma-phosphoanhydride linkage of triphosphate-containing substrates (inorganic or nucleoside-linked). Catalyzes vigorously the hydrolysis of inorganic triphosphate (PPPi), however it can also catalyze the hydrolysis of ATP to ADP and phosphate. It can use ribonucleotides such as GTP, CTP, or UTP and deoxynucleotides such as dATP, dGTP, dCTP, and dTTP. In Acetivibrio thermocellus (strain ATCC 27405 / DSM 1237 / JCM 9322 / NBRC 103400 / NCIMB 10682 / NRRL B-4536 / VPI 7372) (Clostridium thermocellum), this protein is Inorganic triphosphatase.